A 693-amino-acid polypeptide reads, in one-letter code: Protein-glutamine gamma-glutamyltransferase E (693 aa).

Tyr-111 bears the Phosphotyrosine mark. Position 112 is a phosphothreonine (Thr-112). Ca(2+) contacts are provided by Ala-222, Asn-225, Asn-227, Asp-228, and Asn-230. Cys-273 is an active-site residue. Residues Asp-302, Asp-304, Asn-306, Ser-308, and Asp-325 each contribute to the Ca(2+) site. Catalysis depends on residues His-331 and Asp-354. Residues Asn-394, Thr-416, Glu-444, and Glu-449 each coordinate Ca(2+). The disordered stretch occupies residues 457-483; that stretch reads LDKLKPNASFGATSSRNPEGEDKEPSI.

It belongs to the transglutaminase superfamily. Transglutaminase family. As to quaternary structure, consists of two polypeptide chains, which are synthesized as a precursor form of a single polypeptide. Requires Ca(2+) as cofactor. Activated by proteolytic processing. In vitro activation is commonly achieved by cleavage with dispase, a neutral bacterial protease. Physiological activation may be catalyzed by CTSL and, to a lesser extent, by CTSS. As to expression, expressed in skin and stomach and, at lower levels, in testis, kidney and spleen (at protein level). On the basis of its catalytic activity, detected in the epidermis, around the granular and spinous layers but not in the outermost cornified layers. In hair follicles, mainly located in the medulla and the hair cortex.

The protein localises to the cytoplasm. It catalyses the reaction L-glutaminyl-[protein] + L-lysyl-[protein] = [protein]-L-lysyl-N(6)-5-L-glutamyl-[protein] + NH4(+). Catalyzes the calcium-dependent formation of isopeptide cross-links between glutamine and lysine residues in various proteins, as well as the conjugation of polyamines to proteins. Involved in the formation of the cornified envelope (CE), a specialized component consisting of covalent cross-links of proteins beneath the plasma membrane of terminally differentiated keratinocytes. Catalyzes small proline-rich proteins (SPRR1 and SPRR2) and LOR cross-linking to form small interchain oligomers, which are further cross-linked by TGM1 onto the growing CE scaffold. In hair follicles, involved in cross-linking structural proteins to hardening the inner root sheath. This chain is Protein-glutamine gamma-glutamyltransferase E (Tgm3), found in Mus musculus (Mouse).